Reading from the N-terminus, the 333-residue chain is Electron transfer flavoprotein subunit alpha, mitochondrial (333 aa).

The N-terminal 19 residues, 1–19, are a transit peptide targeting the mitochondrion; the sequence is MFRAAAPGQLRRAASLLRF. The domain I stretch occupies residues 20–204; it reads QSTLVIAEHA…EISEWLDQKL (185 aa). N6-acetyllysine; alternate is present on lysine 59. N6-succinyllysine; alternate is present on lysine 59. An N6-acetyllysine modification is found at lysine 62. Residue lysine 69 is modified to N6-acetyllysine; alternate. Lysine 69 carries the N6-succinyllysine; alternate modification. At lysine 75 the chain carries N6-acetyllysine. Position 85 is an N6-acetyllysine; alternate (lysine 85). Position 85 is an N6-succinyllysine; alternate (lysine 85). Threonine 93 bears the Phosphothreonine mark. An N6-acetyllysine mark is found at lysine 101 and lysine 139. Residue serine 140 is modified to Phosphoserine. Lysine 158 is modified (N6-acetyllysine; alternate). Lysine 158 bears the N6-succinyllysine; alternate mark. Lysine 164 carries the N6-acetyllysine modification. N6-succinyllysine is present on lysine 187. Residue lysine 203 is modified to N6-acetyllysine; alternate. N6-succinyllysine; alternate is present on lysine 203. A domain II region spans residues 205–333; the sequence is TKSDRPELTG…PEMTEILKKK (129 aa). Lysine 216 bears the N6-succinyllysine mark. Arginine 223 is an FAD binding site. Lysine 226 and lysine 232 each carry N6-acetyllysine; alternate. Lysine 226 and lysine 232 each carry N6-succinyllysine; alternate. Residues serine 248, 263-266, 281-286, and asparagine 300 contribute to the FAD site; these read VGQT and SGAIQH. An N6-succinyllysine modification is found at lysine 301. Position 318–319 (318–319) interacts with FAD; that stretch reads DL.

Belongs to the ETF alpha-subunit/FixB family. Heterodimer composed of ETFA and ETFB. Identified in a complex that contains ETFA, ETFB and ETFRF1. Interaction with ETFRF1 promotes dissociation of the bound FAD and loss of electron transfer activity. Interacts with TASOR. It depends on FAD as a cofactor. Post-translationally, the N-terminus is blocked.

The protein resides in the mitochondrion matrix. Functionally, heterodimeric electron transfer flavoprotein that accepts electrons from several mitochondrial dehydrogenases, including acyl-CoA dehydrogenases, glutaryl-CoA and sarcosine dehydrogenase. It transfers the electrons to the main mitochondrial respiratory chain via ETF-ubiquinone oxidoreductase (ETF dehydrogenase). Required for normal mitochondrial fatty acid oxidation and normal amino acid metabolism. In Homo sapiens (Human), this protein is Electron transfer flavoprotein subunit alpha, mitochondrial (ETFA).